Consider the following 180-residue polypeptide: Adenine phosphoribosyltransferase (180 aa).

Belongs to the purine/pyrimidine phosphoribosyltransferase family. As to quaternary structure, homodimer.

The protein resides in the cytoplasm. The catalysed reaction is AMP + diphosphate = 5-phospho-alpha-D-ribose 1-diphosphate + adenine. The protein operates within purine metabolism; AMP biosynthesis via salvage pathway; AMP from adenine: step 1/1. Functionally, catalyzes a salvage reaction resulting in the formation of AMP, that is energically less costly than de novo synthesis. The chain is Adenine phosphoribosyltransferase from Mycoplasma genitalium (strain ATCC 33530 / DSM 19775 / NCTC 10195 / G37) (Mycoplasmoides genitalium).